We begin with the raw amino-acid sequence, 255 residues long: Adenylate dimethylallyltransferase (255 aa).

This sequence belongs to the isopentenyl transferase family.

It carries out the reaction dimethylallyl diphosphate + AMP = N(6)-(dimethylallyl)adenosine 5'-phosphate + diphosphate. In terms of biological role, transfers dimethylallyl groups to AMP as part of the biosynthesis of cytokinin phytohormones. In Rhodococcoides fascians (Rhodococcus fascians), this protein is Adenylate dimethylallyltransferase (fas4).